The sequence spans 362 residues: H-2 class I histocompatibility antigen, L-D alpha chain (362 aa).

The first 24 residues, Met-1–Ala-24, serve as a signal peptide directing secretion. The tract at residues Gly-25–Gly-114 is alpha-1. Over Gly-25 to Val-309 the chain is Extracellular. An N-linked (GlcNAc...) asparagine glycan is attached at Asn-110. An alpha-2 region spans residues Gly-115–Thr-206. Residues Cys-125 and Cys-188 are joined by a disulfide bond. N-linked (GlcNAc...) asparagine glycans are attached at residues Asn-200 and Asn-280. Positions Asp-207–Trp-298 are alpha-3. The 89-residue stretch at Pro-209–Arg-297 folds into the Ig-like C1-type domain. The cysteines at positions 227 and 283 are disulfide-linked. Positions Glu-299–Val-309 are connecting peptide. A helical membrane pass occupies residues Ile-310–Met-331. The Cytoplasmic portion of the chain corresponds to Lys-332–Ala-362. Residues Lys-340–Ala-362 are disordered. Ser-353 and Ser-356 each carry phosphoserine.

The protein belongs to the MHC class I family. In terms of assembly, heterodimer of an alpha chain and a beta chain (beta-2-microglobulin).

Its subcellular location is the membrane. Its function is as follows. Involved in the presentation of foreign antigens to the immune system. In Mus musculus (Mouse), this protein is H-2 class I histocompatibility antigen, L-D alpha chain (H2-L).